The sequence spans 228 residues: Lipoprotein-releasing system ATP-binding protein LolD (228 aa).

Positions 6-225 constitute an ABC transporter domain; it reads LEAKDVYKHF…ILHMQDGLWV (220 aa). Position 42-49 (42-49) interacts with ATP; the sequence is GASGSGKS.

It belongs to the ABC transporter superfamily. Lipoprotein translocase (TC 3.A.1.125) family. In terms of assembly, the complex is composed of two ATP-binding proteins (LolD) and two transmembrane proteins (LolC and LolE).

The protein resides in the cell inner membrane. Part of the ABC transporter complex LolCDE involved in the translocation of mature outer membrane-directed lipoproteins, from the inner membrane to the periplasmic chaperone, LolA. Responsible for the formation of the LolA-lipoprotein complex in an ATP-dependent manner. The chain is Lipoprotein-releasing system ATP-binding protein LolD from Acinetobacter baylyi (strain ATCC 33305 / BD413 / ADP1).